The following is a 1243-amino-acid chain: Inositol hexakisphosphate and diphosphoinositol-pentakisphosphate kinase 2 (1243 aa).

Serine 38 carries the phosphoserine modification. 53–54 is a binding site for substrate; that stretch reads KK. Residues arginine 134, lysine 187, histidine 194, and arginine 213 each coordinate ATP. Position 213 to 214 (213 to 214) interacts with substrate; that stretch reads RK. Serine 223 is modified (phosphoserine). ATP-binding positions include 237-240 and 246-248; these read EEFM and DVK. Substrate contacts are provided by lysine 248 and arginine 262. Residues serine 264, aspartate 309, and 321 to 323 each bind ATP; that span reads DVN. Position 326–329 (326–329) interacts with substrate; the sequence is SFVK. A polyphosphoinositide-binding domain region spans residues 371–442; the sequence is PTTSGTMMEL…VLDIARQLLM (72 aa). Disordered stretches follow at residues 898 to 941 and 957 to 1016; these read KGCE…RDEV and HIHR…SPVS. Residues 915–941 show a composition bias toward basic and acidic residues; sequence ASRENEGRRPFKIDNDDEPHTSKRDEV. The segment covering 958–969 has biased composition (basic residues); it reads IHRKSPLPRSRK. 7 positions are modified to phosphoserine: serine 1006, serine 1016, serine 1074, serine 1091, serine 1165, serine 1172, and serine 1180. The interval 1185–1243 is disordered; the sequence is TPAKILPTPPATLKSTKASSKPATSGPSSAVVPNTSSRKKNITSKTETHEHKKNTGKKK. A compositionally biased stretch (low complexity) spans 1195–1209; it reads ATLKSTKASSKPATS. Residues 1210–1220 show a composition bias toward polar residues; that stretch reads GPSSAVVPNTS. Residues serine 1220 and serine 1221 each carry the phosphoserine modification.

Belongs to the histidine acid phosphatase family. VIP1 subfamily.

Its subcellular location is the cytoplasm. The protein resides in the cytosol. It carries out the reaction 1D-myo-inositol hexakisphosphate + ATP = 1-diphospho-1D-myo-inositol 2,3,4,5,6-pentakisphosphate + ADP. The catalysed reaction is 5-diphospho-1D-myo-inositol 1,2,3,4,6-pentakisphosphate + ATP + H(+) = 1,5-bis(diphospho)-1D-myo-inositol 2,3,4,6-tetrakisphosphate + ADP. Its function is as follows. Bifunctional inositol kinase that acts in concert with the IP6K kinases IP6K1, IP6K2 and IP6K3 to synthesize the diphosphate group-containing inositol pyrophosphates diphosphoinositol pentakisphosphate, PP-InsP5, and bis-diphosphoinositol tetrakisphosphate, (PP)2-InsP4. PP-InsP5 and (PP)2-InsP4, also respectively called InsP7 and InsP8, regulate a variety of cellular processes, including apoptosis, vesicle trafficking, cytoskeletal dynamics, exocytosis, insulin signaling and neutrophil activation. Phosphorylates inositol hexakisphosphate (InsP6) at position 1 to produce PP-InsP5 which is in turn phosphorylated by IP6Ks to produce (PP)2-InsP4. Alternatively, phosphorylates PP-InsP5 at position 1, produced by IP6Ks from InsP6, to produce (PP)2-InsP4. Required for normal hearing. This chain is Inositol hexakisphosphate and diphosphoinositol-pentakisphosphate kinase 2, found in Homo sapiens (Human).